We begin with the raw amino-acid sequence, 728 residues long: Fibulin-1 (728 aa).

Positions 1–17 are cleaved as a signal peptide; that stretch reads MRICFLLLAFLVAETFA. Cystine bridges form between cysteine 23-cysteine 49, cysteine 24-cysteine 56, cysteine 37-cysteine 57, cysteine 66-cysteine 94, cysteine 79-cysteine 95, cysteine 97-cysteine 121, cysteine 98-cysteine 128, cysteine 111-cysteine 129, cysteine 159-cysteine 168, cysteine 164-cysteine 178, cysteine 180-cysteine 279, cysteine 285-cysteine 298, cysteine 292-cysteine 307, cysteine 347-cysteine 359, cysteine 353-cysteine 368, cysteine 375-cysteine 388, cysteine 394-cysteine 404, cysteine 399-cysteine 413, cysteine 415-cysteine 428, cysteine 434-cysteine 448, cysteine 442-cysteine 457, cysteine 459-cysteine 472, cysteine 478-cysteine 489, cysteine 485-cysteine 498, cysteine 500-cysteine 513, cysteine 519-cysteine 534, cysteine 530-cysteine 543, cysteine 545-cysteine 558, cysteine 564-cysteine 576, and cysteine 569-cysteine 585. Anaphylatoxin-like domains lie at 23–64, 65–96, and 97–129; these read CCAG…LLDN, ACDS…ECCD, and CCLL…NKCC. One can recognise an EGF-like 1 domain in the interval 155–194; sequence LGDRCASSHCEHLCHDRGGEKVECSCRSGFDLAPDGMACV. The EGF-like 2; calcium-binding domain occupies 195–280; that stretch reads DRNECLTRQS…GWLFQHGHCV (86 aa). The EGF-like 3; calcium-binding domain maps to 281 to 344; that stretch reads DVDECNLGSH…YPKNGMCNDI (64 aa). The EGF-like 4; calcium-binding domain maps to 343–389; sequence DIDECVTGHNCGAGEECVNTPGSFRCQQKGNLCAHGYEVNGATGFCE. The EGF-like 5; calcium-binding domain occupies 390–429; sequence DVNECQQGVCGSMECINLPGTYKCKCGPGYEFNDAKKRCE. The EGF-like 6; calcium-binding domain maps to 430–473; sequence DVDECIKFAGHVCDLSAECINTIGSFECKCKPGFQLASDGRRCE. The EGF-like 7; calcium-binding domain maps to 474–514; sequence DVNECTTGIAACEQKCVNIPGSYQCICDRGFALGPDGTKCE. In terms of domain architecture, EGF-like 8; calcium-binding spans 515–559; the sequence is DIDECSIWAGSGNDLCMGGCINTKGSYLCQCPPGYKIQPDGRTCV. The EGF-like 9; calcium-binding domain occupies 560 to 610; the sequence is DVDECAMGECAGSDKVCVNTLGSFKCHSIDCPTNYIHDSLNKNQIADGYSC. An N-linked (GlcNAc...) asparagine glycan is attached at asparagine 624.

This sequence belongs to the fibulin family. In terms of assembly, homomultimerizes and interacts with various extracellular matrix components. In terms of tissue distribution, expressed in head muscle cells, anterior and posterior intestinal cells. Isoform a: Expressed in male and hermaphrodite gonad, anterior and posterior intestine and pharyngeal basement membranes, body-wall muscle, GLR cells, uterine attachment and mechanosensory neurons. Isoform c: Expressed on ALM/PLM mechanosensory neuron attachments, in flexible tracks connecting the pharyngeal, body-wall-muscle basement membranes and in uterine attachments.

The protein localises to the secreted. It localises to the extracellular space. The protein resides in the extracellular matrix. Its subcellular location is the basement membrane. Its function is as follows. Incorporated into fibronectin-containing matrix fibers. Plays a role in cell adhesion and migration along protein fibers within the extracellular matrix (ECM). Important for certain developmental processes and contributes to the supramolecular organization of ECM architecture, in particular to those of basement membranes. In terms of biological role, involved in regulating the shape and adhesion of cells in the developing pharynx, intestine, body-wall muscle and gonadal tissue. During gonadogenesis, regulates the width of gonads and the migration of distal tip cells (DTC). Together with type IV collagen let-2 and downstream of metalloprotease mig-17, recruits nidogen nid-1 to the gonad basement membrane thereby inducing basement membrane remodeling required for the directional migration of DTCs. Acts antagonistically with metalloprotease gon-1 to maintain optimal levels of type IV collagen emb-9 in the gonad basement membrane during gonadogenesis. Required for larval development. Involved in the assembly of the flexible hemicentin-containing tracks found joining the pharynx and body-wall-muscle basement membranes. The sequence is that of Fibulin-1 (fbl-1) from Caenorhabditis elegans.